The sequence spans 333 residues: ATP synthase subunit a (333 aa).

Residues 1–32 form the signal peptide; sequence MIYLHNKRKGMLKRLSALIVIGLLMNLPAVFA. 7 consecutive transmembrane segments (helical) span residues 100–120, 161–181, 185–205, 229–249, 254–274, 279–299, and 300–320; these read HVVM…GVGN, FMPF…IGLV, ATAT…FLVT, LMWI…PFAL, FANM…IFVF, IAPV…LVAF, and LQAY…VAHE.

It belongs to the ATPase A chain family. F-type ATPases have 2 components, CF(1) - the catalytic core - and CF(0) - the membrane proton channel. CF(1) has five subunits: alpha(3), beta(3), gamma(1), delta(1), epsilon(1). CF(0) has four main subunits: a, b, b' and c.

Its subcellular location is the cell inner membrane. Its function is as follows. Key component of the proton channel; it plays a direct role in the translocation of protons across the membrane. The polypeptide is ATP synthase subunit a (Chloroherpeton thalassium (strain ATCC 35110 / GB-78)).